We begin with the raw amino-acid sequence, 341 residues long: Phenylalanine--tRNA ligase alpha subunit (341 aa).

Glu254 contacts Mg(2+).

This sequence belongs to the class-II aminoacyl-tRNA synthetase family. Phe-tRNA synthetase alpha subunit type 1 subfamily. Tetramer of two alpha and two beta subunits. Mg(2+) serves as cofactor.

The protein localises to the cytoplasm. The enzyme catalyses tRNA(Phe) + L-phenylalanine + ATP = L-phenylalanyl-tRNA(Phe) + AMP + diphosphate + H(+). The sequence is that of Phenylalanine--tRNA ligase alpha subunit (pheS) from Mycoplasma genitalium (strain ATCC 33530 / DSM 19775 / NCTC 10195 / G37) (Mycoplasmoides genitalium).